The following is a 213-amino-acid chain: Serine acetyltransferase (213 aa).

It belongs to the transferase hexapeptide repeat family.

The protein resides in the cytoplasm. The enzyme catalyses L-serine + acetyl-CoA = O-acetyl-L-serine + CoA. Its pathway is amino-acid biosynthesis; L-cysteine biosynthesis; L-cysteine from L-serine: step 1/2. This Staphylococcus aureus (strain COL) protein is Serine acetyltransferase (cysE).